A 459-amino-acid chain; its full sequence is Putrescine aminotransferase (459 aa).

Pyridoxal 5'-phosphate-binding positions include 150–151 (GT) and glutamine 274. Position 300 is an N6-(pyridoxal phosphate)lysine (lysine 300). Threonine 332 is a pyridoxal 5'-phosphate binding site.

Belongs to the class-III pyridoxal-phosphate-dependent aminotransferase family. Putrescine aminotransferase subfamily. Pyridoxal 5'-phosphate serves as cofactor.

The enzyme catalyses an alkane-alpha,omega-diamine + 2-oxoglutarate = an omega-aminoaldehyde + L-glutamate. The catalysed reaction is putrescine + 2-oxoglutarate = 1-pyrroline + L-glutamate + H2O. It catalyses the reaction cadaverine + 2-oxoglutarate = 5-aminopentanal + L-glutamate. It participates in amine and polyamine degradation; putrescine degradation; 4-aminobutanal from putrescine (transaminase route): step 1/1. Its function is as follows. Catalyzes the aminotransferase reaction from putrescine to 2-oxoglutarate, leading to glutamate and 4-aminobutanal, which spontaneously cyclizes to form 1-pyrroline. This is the first step in one of two pathways for putrescine degradation, where putrescine is converted into 4-aminobutanoate (gamma-aminobutyrate or GABA) via 4-aminobutanal. Also functions as a cadaverine transaminase in a a L-lysine degradation pathway to succinate that proceeds via cadaverine, glutarate and L-2-hydroxyglutarate. In Escherichia coli O8 (strain IAI1), this protein is Putrescine aminotransferase.